Here is a 339-residue protein sequence, read N- to C-terminus: Phosphate acyltransferase (339 aa).

The protein belongs to the PlsX family. As to quaternary structure, homodimer. Probably interacts with PlsY.

Its subcellular location is the cytoplasm. It carries out the reaction a fatty acyl-[ACP] + phosphate = an acyl phosphate + holo-[ACP]. Its pathway is lipid metabolism; phospholipid metabolism. In terms of biological role, catalyzes the reversible formation of acyl-phosphate (acyl-PO(4)) from acyl-[acyl-carrier-protein] (acyl-ACP). This enzyme utilizes acyl-ACP as fatty acyl donor, but not acyl-CoA. In Helicobacter pylori (strain Shi470), this protein is Phosphate acyltransferase.